The following is a 1001-amino-acid chain: Serine/threonine-protein kinase TAO1 (1001 aa).

Residue serine 9 is modified to Phosphoserine. Residues phenylalanine 28 to valine 281 form the Protein kinase domain. ATP-binding positions include isoleucine 34–valine 42 and lysine 57. The Proton acceptor role is filled by aspartate 151. 2 disordered regions span residues proline 324–glutamate 380 and glutamate 404–arginine 433. Positions serine 350–serine 370 are enriched in low complexity. Phosphoserine occurs at positions 421 and 445. Residues serine 458 to methionine 651 are a coiled coil. Positions lysine 567–lysine 587 are disordered. Positions proline 577 to lysine 587 are enriched in basic and acidic residues. The residue at position 669 (threonine 669) is a Phosphothreonine. Residues lysine 754–alanine 877 are a coiled coil. Positions proline 905–threonine 1001 are disordered. The span at histidine 921–proline 930 shows a compositional bias: low complexity. A Phosphoserine modification is found at serine 965. The span at glycine 975–threonine 1001 shows a compositional bias: polar residues.

Belongs to the protein kinase superfamily. STE Ser/Thr protein kinase family. STE20 subfamily. As to quaternary structure, self-associates. Interacts with MAP2K3. Interacts with SPRED1. Interacts with TESK1; the interaction inhibits TAOK1 kinase activity. Interacts with MAP3K7. Proteolytically processed by caspase-3 (CASP3). Post-translationally, autophosphorylated. Phosphorylated by ATM in response to DNA damage. Phosphorylated by LRRK2.

It is found in the cytoplasm. It catalyses the reaction L-seryl-[protein] + ATP = O-phospho-L-seryl-[protein] + ADP + H(+). The catalysed reaction is L-threonyl-[protein] + ATP = O-phospho-L-threonyl-[protein] + ADP + H(+). Serine/threonine-protein kinase activity is inhibited by SPRED1. Functionally, serine/threonine-protein kinase involved in various processes such as p38/MAPK14 stress-activated MAPK cascade, DNA damage response and regulation of cytoskeleton stability. Phosphorylates MAP2K3, MAP2K6 and MARK2. Acts as an activator of the p38/MAPK14 stress-activated MAPK cascade by mediating phosphorylation and subsequent activation of the upstream MAP2K3 and MAP2K6 kinases. Involved in G-protein coupled receptor signaling to p38/MAPK14. In response to DNA damage, involved in the G2/M transition DNA damage checkpoint by activating the p38/MAPK14 stress-activated MAPK cascade, probably by mediating phosphorylation of MAP2K3 and MAP2K6. Acts as a regulator of cytoskeleton stability by phosphorylating 'Thr-208' of MARK2, leading to activate MARK2 kinase activity and subsequent phosphorylation and detachment of MAPT/TAU from microtubules. Also acts as a regulator of apoptosis: regulates apoptotic morphological changes, including cell contraction, membrane blebbing and apoptotic bodies formation via activation of the MAPK8/JNK cascade. During fetal development, it plays an essential role in the regulation of neuronal differentiation and migration to the cortical plate. The protein is Serine/threonine-protein kinase TAO1 (Taok1) of Mus musculus (Mouse).